A 173-amino-acid chain; its full sequence is Archaemetzincin (173 aa).

Residue His-130 participates in Zn(2+) binding. Glu-131 serves as the catalytic Proton acceptor. Zn(2+) contacts are provided by His-134, His-140, Cys-141, Cys-146, Cys-165, and Cys-168.

It belongs to the peptidase M54 family. In terms of assembly, monomer. Zn(2+) is required as a cofactor.

Probable zinc metalloprotease whose natural substrate is unknown. The polypeptide is Archaemetzincin (Haloquadratum walsbyi (strain DSM 16790 / HBSQ001)).